Reading from the N-terminus, the 202-residue chain is MCTGGCARCLGGTLIPLAVFGLLANILLFFPGGKVVNDKSHLSDEVWYFGGILGSGVLMIFPALVFLGLQNNDCCGCCGNEGCGKRFAMFTSTLFAVIGFLGAGYSFIVSAVSINKGPKCFMANGTWGYPFHDGDYLKDQALWSECEEPRDVVPWNLTLFSILLVIGGIQMVLCAIQVINGLLGTLCGDCQCCGCCGGDGPV.

Over 1 to 9 the chain is Cytoplasmic; it reads MCTGGCARC. A helical transmembrane segment spans residues 10–30; that stretch reads LGGTLIPLAVFGLLANILLFF. Residues 31–48 lie on the Extracellular side of the membrane; that stretch reads PGGKVVNDKSHLSDEVWY. The helical transmembrane segment at 49–69 threads the bilayer; sequence FGGILGSGVLMIFPALVFLGL. The Cytoplasmic portion of the chain corresponds to 70-93; it reads QNNDCCGCCGNEGCGKRFAMFTST. Residues 94-114 form a helical membrane-spanning segment; it reads LFAVIGFLGAGYSFIVSAVSI. Over 115-158 the chain is Extracellular; it reads NKGPKCFMANGTWGYPFHDGDYLKDQALWSECEEPRDVVPWNLT. Asn156 carries N-linked (GlcNAc...) asparagine glycosylation. The helical transmembrane segment at 159-179 threads the bilayer; sequence LFSILLVIGGIQMVLCAIQVI. Residues 180–202 lie on the Cytoplasmic side of the membrane; sequence NGLLGTLCGDCQCCGCCGGDGPV.

The protein belongs to the L6 tetraspanin family.

The protein localises to the membrane. Regulates the adhesive and proliferative status of intestinal epithelial cells. Can mediate density-dependent cell proliferation. In Mus musculus (Mouse), this protein is Transmembrane 4 L6 family member 4 (Tm4sf4).